The primary structure comprises 141 residues: Galactose-6-phosphate isomerase subunit LacA (141 aa).

It belongs to the LacAB/RpiB family. As to quaternary structure, heteromultimeric protein consisting of LacA and LacB.

The enzyme catalyses aldehydo-D-galactose 6-phosphate = keto-D-tagatose 6-phosphate. It functions in the pathway carbohydrate metabolism; D-galactose 6-phosphate degradation; D-tagatose 6-phosphate from D-galactose 6-phosphate: step 1/1. This chain is Galactose-6-phosphate isomerase subunit LacA, found in Streptococcus pneumoniae (strain Taiwan19F-14).